The sequence spans 555 residues: Probable terpene synthase 6 (555 aa).

Mg(2+)-binding residues include D309, D313, and E460. The DDXXD motif signature appears at 309-313 (DDTYD).

Belongs to the terpene synthase family. Mg(2+) serves as cofactor.

In terms of biological role, probable sesquiterpene synthase. This Ricinus communis (Castor bean) protein is Probable terpene synthase 6 (TPS6).